A 336-amino-acid chain; its full sequence is Phospho-N-acetylmuramoyl-pentapeptide-transferase (336 aa).

10 helical membrane passes run 3–23 (LTLI…PYFI), 53–73 (GGTV…LFSI), 78–98 (SLAL…IGFL), 118–138 (LALQ…PSGI), 143–163 (VFGY…FWVV), 174–194 (GIDG…GVIA), 200–220 (FDVL…FLFN), 226–246 (VFMG…ISIA), 251–271 (WTLL…MLQV), and 316–336 (AFLW…LYVF).

The protein belongs to the glycosyltransferase 4 family. MraY subfamily. The cofactor is Mg(2+).

Its subcellular location is the cell membrane. The enzyme catalyses UDP-N-acetyl-alpha-D-muramoyl-L-alanyl-gamma-D-glutamyl-L-lysyl-D-alanyl-D-alanine + di-trans,octa-cis-undecaprenyl phosphate = Mur2Ac(oyl-L-Ala-gamma-D-Glu-L-Lys-D-Ala-D-Ala)-di-trans,octa-cis-undecaprenyl diphosphate + UMP. It functions in the pathway cell wall biogenesis; peptidoglycan biosynthesis. Functionally, catalyzes the initial step of the lipid cycle reactions in the biosynthesis of the cell wall peptidoglycan: transfers peptidoglycan precursor phospho-MurNAc-pentapeptide from UDP-MurNAc-pentapeptide onto the lipid carrier undecaprenyl phosphate, yielding undecaprenyl-pyrophosphoryl-MurNAc-pentapeptide, known as lipid I. The chain is Phospho-N-acetylmuramoyl-pentapeptide-transferase from Streptococcus pyogenes serotype M6 (strain ATCC BAA-946 / MGAS10394).